We begin with the raw amino-acid sequence, 133 residues long: Large ribosomal subunit protein bL20 (133 aa).

This sequence belongs to the bacterial ribosomal protein bL20 family.

In terms of biological role, binds directly to 23S ribosomal RNA and is necessary for the in vitro assembly process of the 50S ribosomal subunit. It is not involved in the protein synthesizing functions of that subunit. The sequence is that of Large ribosomal subunit protein bL20 from Bartonella henselae (strain ATCC 49882 / DSM 28221 / CCUG 30454 / Houston 1) (Rochalimaea henselae).